A 240-amino-acid chain; its full sequence is Large ribosomal subunit protein uL2 (240 aa).

The span at 1–12 (MGRRIQGQRRGR) shows a compositional bias: basic residues. Disordered stretches follow at residues 1–21 (MGRRIQGQRRGRGGPTFRAPS) and 198–240 (VDHP…GSNK). A compositionally biased stretch (basic and acidic residues) spans 221 to 231 (PPGRKVGDIAS).

This sequence belongs to the universal ribosomal protein uL2 family. In terms of assembly, part of the 50S ribosomal subunit. Forms a bridge to the 30S subunit in the 70S ribosome.

Functionally, one of the primary rRNA binding proteins. Required for association of the 30S and 50S subunits to form the 70S ribosome, for tRNA binding and peptide bond formation. It has been suggested to have peptidyltransferase activity; this is somewhat controversial. Makes several contacts with the 16S rRNA in the 70S ribosome. The chain is Large ribosomal subunit protein uL2 from Halorubrum lacusprofundi (strain ATCC 49239 / DSM 5036 / JCM 8891 / ACAM 34).